The primary structure comprises 540 residues: Putative sel1-like repeat-containing protein R815 (540 aa).

6 Sel1-like repeats span residues 129 to 164 (IDAQTNYGLVNEYGIGVKKNIKKAIKWYKLSCYKEN), 165 to 200 (LFGLLFLGSLYERGYGVSCDKHMAFNLYEKATKHNY), 201 to 236 (PAVKRQLAFMYRTGSGTTKNINKSHELYREAANQGY), 237 to 272 (PLAQYALALQCKYGHGCIKNYKEAETWLIRSYNNGC), 273 to 308 (LYATYSLARLYIETKSPLRNYSRAFELMQEAASENY), and 309 to 344 (LLAINYLAKIYKNGIGVNKNISRAIYWYYKAGNSTK).

This is Putative sel1-like repeat-containing protein R815 from Acanthamoeba polyphaga (Amoeba).